We begin with the raw amino-acid sequence, 143 residues long: Large ribosomal subunit protein uL11 (143 aa).

This sequence belongs to the universal ribosomal protein uL11 family. As to quaternary structure, part of the ribosomal stalk of the 50S ribosomal subunit. Interacts with L10 and the large rRNA to form the base of the stalk. L10 forms an elongated spine to which L12 dimers bind in a sequential fashion forming a multimeric L10(L12)X complex. In terms of processing, one or more lysine residues are methylated.

Its function is as follows. Forms part of the ribosomal stalk which helps the ribosome interact with GTP-bound translation factors. In Psychrobacter cryohalolentis (strain ATCC BAA-1226 / DSM 17306 / VKM B-2378 / K5), this protein is Large ribosomal subunit protein uL11.